A 1024-amino-acid chain; its full sequence is Carbamoyl phosphate synthase large chain (1024 aa).

The tract at residues 1–402 is carboxyphosphate synthetic domain; sequence MPKRTDLQTI…SLQKALRSTE (402 aa). The ATP site is built by Arg-129, Arg-169, Gly-175, Gly-176, Glu-208, Ile-210, Glu-215, Gly-241, Val-242, His-243, Gln-285, and Glu-299. The ATP-grasp 1 domain occupies 133 to 328; sequence QAAMKKIGVE…IAKIAALLAV (196 aa). Residues Gln-285, Glu-299, and Asn-301 each contribute to the Mg(2+) site. Gln-285, Glu-299, and Asn-301 together coordinate Mn(2+). The oligomerization domain stretch occupies residues 403–546; that stretch reads GDIRGVYAEM…YSTYEWEDEV (144 aa). Residues 547–929 are carbamoyl phosphate synthetic domain; the sequence is APTDKPKVVI…AFYRAQLGAK (383 aa). The ATP-grasp 2 domain maps to 671 to 863; it reads NALCERLGLP…LAKSAARIAA (193 aa). ATP is bound by residues Arg-707, Gln-747, Leu-749, Glu-754, Gly-779, Val-780, His-781, Ser-782, Gln-822, and Glu-834. Residues Gln-822, Glu-834, and Asn-836 each coordinate Mg(2+). The Mn(2+) site is built by Gln-822, Glu-834, and Asn-836. The 95-residue stretch at 930–1024 folds into the MGS-like domain; sequence NYLPLEGTAL…GVRSLQEWVK (95 aa). Positions 930-1024 are allosteric domain; sequence NYLPLEGTAL…GVRSLQEWVK (95 aa).

This sequence belongs to the CarB family. In terms of assembly, composed of two chains; the small (or glutamine) chain promotes the hydrolysis of glutamine to ammonia, which is used by the large (or ammonia) chain to synthesize carbamoyl phosphate. Tetramer of heterodimers (alpha,beta)4. Mg(2+) is required as a cofactor. It depends on Mn(2+) as a cofactor.

It catalyses the reaction hydrogencarbonate + L-glutamine + 2 ATP + H2O = carbamoyl phosphate + L-glutamate + 2 ADP + phosphate + 2 H(+). It carries out the reaction hydrogencarbonate + NH4(+) + 2 ATP = carbamoyl phosphate + 2 ADP + phosphate + 2 H(+). The protein operates within amino-acid biosynthesis; L-arginine biosynthesis; carbamoyl phosphate from bicarbonate: step 1/1. It participates in pyrimidine metabolism; UMP biosynthesis via de novo pathway; (S)-dihydroorotate from bicarbonate: step 1/3. Its function is as follows. Large subunit of the glutamine-dependent carbamoyl phosphate synthetase (CPSase). CPSase catalyzes the formation of carbamoyl phosphate from the ammonia moiety of glutamine, carbonate, and phosphate donated by ATP, constituting the first step of 2 biosynthetic pathways, one leading to arginine and/or urea and the other to pyrimidine nucleotides. The large subunit (synthetase) binds the substrates ammonia (free or transferred from glutamine from the small subunit), hydrogencarbonate and ATP and carries out an ATP-coupled ligase reaction, activating hydrogencarbonate by forming carboxy phosphate which reacts with ammonia to form carbamoyl phosphate. In Deinococcus radiodurans (strain ATCC 13939 / DSM 20539 / JCM 16871 / CCUG 27074 / LMG 4051 / NBRC 15346 / NCIMB 9279 / VKM B-1422 / R1), this protein is Carbamoyl phosphate synthase large chain.